Reading from the N-terminus, the 199-residue chain is MPIEIPTDLTPELVPLSWLIGEWEGRGRLGSGDEDSEHFVQRVSFTHNGLPYLQYRAETWLSDDAGEKLRPLTVETGFWALERKLEEGDGGPGLIPADIVPVLKTADEVEERRNKEGGFDISVSIAHPGGITELYYGQIKGPQIQLSTDMVMRGSHSKEYTAATRIFGLVDGNLLWRWDVAASGKALEAHASAFLHKVS.

Positions 21–27 (GEWEGRG) match the GXWXGXG motif. His190 serves as a coordination point for heme b.

It belongs to the nitrobindin family. In terms of assembly, homodimer. Requires heme b as cofactor.

It carries out the reaction peroxynitrite = nitrate. It functions in the pathway nitrogen metabolism. Functionally, heme-binding protein able to scavenge peroxynitrite and to protect free L-tyrosine against peroxynitrite-mediated nitration, by acting as a peroxynitrite isomerase that converts peroxynitrite to nitrate. Therefore, this protein likely plays a role in peroxynitrite sensing and in the detoxification of reactive nitrogen and oxygen species (RNS and ROS, respectively). Is able to bind nitric oxide (NO) in vitro, but may act as a sensor of peroxynitrite levels in vivo. The polypeptide is Peroxynitrite isomerase (Paenarthrobacter aurescens (strain TC1)).